The primary structure comprises 194 residues: PPE family protein PPE41 (194 aa).

This sequence belongs to the mycobacterial PPE family. In terms of assembly, forms a heterodimer with PE25. The dimer forms a 1:1:1 heterotrimeric complex with EspG5. PPE41 interacts directly with EspG5.

The protein resides in the secreted. It localises to the cell surface. Functionally, the PE25/PPE41 dimer induces both a strong humoral and cellular immune response. The dimer induces necrosis, but not apoptosis, in mouse macrophage cells. It also induces activation and maturation of mouse dendritic cells and drives Th2-biased immune responses. The chain is PPE family protein PPE41 from Mycobacterium tuberculosis (strain ATCC 25618 / H37Rv).